Consider the following 7096-residue polypeptide: Replicase polyprotein 1ab (7096 aa).

Residues 1-147 form a disordered region; sequence MESLVPGFNE…ADLKSFDLGD (147 aa). Over 1–2225 the chain is Cytoplasmic; sequence MESLVPGFNE…NYLKSPNFSK (2225 aa). In terms of domain architecture, CoV Nsp1 globular spans 12–127; the sequence is THVQLSLPVL…YRKVLLRKNG (116 aa). Residues 148–179 enclose the BetaCoV Nsp1 C-terminal domain; sequence ELGTDPYEDFQENWNTKHSSGVTRELMRELNG. The segment at 154-180 is binding to 40s ribosome mRNA entry channel; the sequence is YEDFQENWNTKHSSGVTRELMRELNGG. Residues 183 to 456 form the CoV Nsp2 N-terminal domain; sequence TRYVDNNFCG…NDNLLEILQK (274 aa). The Zn(2+) site is built by Cys-200, Cys-231, His-234, His-236, Cys-323, Cys-326, Cys-341, Cys-344, Cys-370, Cys-373, His-382, and Cys-416. Positions 200-236 are C2H2; that stretch reads CIKDLLARAGKASCTLSEQLDFIDTKRGVYCCREHEH. Positions 323–344 are C4; sequence CDHCGETSWQTGDFVKATCEFC. The C2HC stretch occupies residues 370-416; sequence CPACHNSEVGPEHSLAEYHNESGLKTILRKGGRTIAFGGCVFSYVGC. One can recognise a CoV Nsp2 middle domain in the interval 458–688; sequence KVNINIVGDF…FKLVNKFLAL (231 aa). LRR repeat units lie at residues 545–569 and 697–719; these read RSIF…AITI and GAKL…LYRK. A CoV Nsp2 C-terminal domain is found at 690–818; sequence ADSIIIGGAK…TNNTFTLKGG (129 aa). One can recognise a Ubiquitin-like 1 domain in the interval 821–929; that stretch reads TKVTFGDDTV…MYCSFYPPDE (109 aa). The disordered stretch occupies residues 926-999; the sequence is PPDEDEEEGD…QQDGSEDNQT (74 aa). Acidic residues-rich tracts occupy residues 927–942 and 971–984; these read PDED…EEFE and PEEE…DDDS. 3 consecutive Macro domains span residues 1025 to 1194, 1231 to 1359, and 1367 to 1494; these read VNSF…LEMK, KIKA…LPSI, and ILGT…TSSS. The DPUP domain maps to 1496 to 1561; the sequence is TPEEHFIETI…TFDNLKTLLS (66 aa). The region spanning 1565–1620 is the Ubiquitin-like 2 domain; it reads VRTIKVFTTVDNINLHTQVVDMSMTYGQQFGPTYLDGADVTKIKPHNSHEGKTFYV. Residues 1634-1898 form the Peptidase C16 domain; it reads YYHTTDPSFL…CTEIDPKLDN (265 aa). Cys-1674 acts as the For PL-PRO activity in catalysis. The LRR 3 repeat unit spans residues 1680 to 1702; the sequence is LLTLQQIELKFNPPALQDAYYRA. The Zn(2+) site is built by Cys-1752, Cys-1755, Cys-1787, and Cys-1789. The segment at 1752–1789 adopts a C4-type zinc-finger fold; it reads CKTCGQQQTTLKGVEAVMYMGTLSYEQFKKGVQIPCTC. Residues His-1835 and Asp-1849 each act as for PL-PRO activity in the active site. Residues 1911–2021 enclose the Nucleic acid-binding domain; it reads PIDLVPNQPY…CLWSTKPVET (111 aa). One can recognise a G2M domain in the interval 2046 to 2155; sequence PVSEEVVENP…LNKVVSTTTN (110 aa). Residues 2226–2246 form a helical membrane-spanning segment; the sequence is LINIIIWFLLLSVCLGSLIYS. The Lumenal segment spans residues 2247–2317; sequence TAALGVLMSN…QITISSFKWD (71 aa). Residues 2247 to 2317 form the 3Ecto domain; it reads TAALGVLMSN…QITISSFKWD (71 aa). Disulfide bonds link Cys-2263–Cys-2291 and Cys-2282–Cys-2288. A helical membrane pass occupies residues 2318–2338; the sequence is LTAFGLVAEWFLAYILFTRFF. Residues 2339-2775 lie on the Cytoplasmic side of the membrane; it reads YVLGLAAIMQ…VNNWLKQLIK (437 aa). A Y1 region spans residues 2395–2485; the sequence is KSYVHVVDGC…QFKRPINPTD (91 aa). A CoV Nsp3 Y domain is found at 2395–2763; sequence KSYVHVVDGC…VTTKIALKGG (369 aa). Zn(2+) is bound by residues His-2399, Cys-2404, Cys-2409, Cys-2412, Cys-2445, His-2448, Cys-2452, and Cys-2455. The tract at residues 2399-2412 is ZF1; the sequence is HVVDGCNSSTCMMC. Residues 2445–2455 are ZF2; sequence CKLHNWNCVNC. The interval 2486-2580 is Y2; the sequence is QSSYIVDSVT…LLDQALVSDV (95 aa). The interval 2486-2763 is coV-Y; that stretch reads QSSYIVDSVT…VTTKIALKGG (278 aa). The Y3 stretch occupies residues 2581–2662; it reads GDSAEVAVKM…ECLKLSHQSD (82 aa). The interval 2663–2763 is Y4; that stretch reads IEVTGDSCNN…VTTKIALKGG (101 aa). The helical transmembrane segment at 2776 to 2796 threads the bilayer; it reads VTLVFLFVAAIFYLITPVHVM. Topologically, residues 2797–3044 are lumenal; the sequence is SKHTDFSSEI…IQPIGALDIS (248 aa). Residues 3045–3065 form a helical membrane-spanning segment; that stretch reads ASIVAGGIVAIVVTCLAYYFM. Residues 3066 to 3099 lie on the Cytoplasmic side of the membrane; it reads RFRRAFGEYSHVVAFNTLLFLMSFTVLCLTPVYS. The helical transmembrane segment at 3100-3120 threads the bilayer; the sequence is FLPGVYSVIYLYLTFYLTNDV. Over 3121 to 3127 the chain is Lumenal; the sequence is SFLAHIQ. Residues 3128-3148 traverse the membrane as a helical segment; that stretch reads WMVMFTPLVPFWITIAYIICI. The Cytoplasmic segment spans residues 3149-3586; that stretch reads STKHFYWFFS…KGTHHWLLLT (438 aa). Residues 3165–3263 enclose the Nsp4C domain; that stretch reads VVFNGVSFST…QTSITSAVLQ (99 aa). The LRR 4 repeat unit spans residues 3185–3206; that stretch reads LNKEMYLKLRSDVLLPLTQYNR. Positions 3264 to 3569 constitute a Peptidase C30 domain; that stretch reads SGFRKMAFPS…VRQCSGVTFQ (306 aa). A Glycyl lysine isopeptide (Lys-Gly) (interchain with G-Cter in ubiquitin) cross-link involves residue Lys-3268. The active-site For 3CL-PRO activity is the His-3304. Lys-3353 participates in a covalent cross-link: Glycyl lysine isopeptide (Lys-Gly) (interchain with G-Cter in ubiquitin). Cys-3408 functions as the Nucleophile; for 3CL-PRO activity in the catalytic mechanism. A helical transmembrane segment spans residues 3587–3607; the sequence is ILTSLLVLVQSTQWSLFFFLY. Position 3608 (Glu-3608) is a topological domain, lumenal. The helical transmembrane segment at 3609–3629 threads the bilayer; sequence NAFLPFAMGIIAMSAFAMMFV. The Cytoplasmic portion of the chain corresponds to 3630-3634; that stretch reads KHKHA. Residues 3635-3655 traverse the membrane as a helical segment; sequence FLCLFLLPSLATVAYFNMVYM. The Lumenal segment spans residues 3656 to 3673; the sequence is PASWVMRIMTWLDMVDTS. The chain crosses the membrane as a helical span at residues 3674 to 3694; that stretch reads LSGFKLKDCVMYASAVVLLIL. The Cytoplasmic segment spans residues 3695–3729; sequence MTARTVYDDGARRVWTLMNVLTLVYKVYYGNALDQ. A helical membrane pass occupies residues 3730-3750; that stretch reads AISMWALIISVTSNYSGVVTT. Residues 3751 to 3778 lie on the Lumenal side of the membrane; sequence VMFLARGIVFMCVEYCPIFFITGNTLQC. A helical membrane pass occupies residues 3779-3799; that stretch reads IMLVYCFLGYFCTCYFGLFCL. Residues 3800 to 7096 are Cytoplasmic-facing; that stretch reads LNRYFRLTLG…VISSDVLVNN (3297 aa). The region spanning 3860 to 3942 is the RdRp Nsp7 cofactor domain; it reads SKMSDVKCTS…EMLDNRATLQ (83 aa). The disordered stretch occupies residues 3931–4020; sequence CEEMLDNRAT…QMYKQARSED (90 aa). LRR repeat units follow at residues 3935-3959 and 3977-4004; these read LDNR…AFAT and LKKL…LEKM. In terms of domain architecture, RdRp Nsp8 cofactor spans 3943-4140; that stretch reads AIASEFSSLP…LRANSAVKLQ (198 aa). The 113-residue stretch at 4141 to 4253 folds into the Nsp9 ssRNA-binding domain; sequence NNELSPVALR…GSLAATVRLQ (113 aa). In terms of domain architecture, ExoN/MTase coactivator spans 4254–4392; it reads AGNATEVPAN…CDQLREPMLQ (139 aa). Cys-4327, Cys-4330, His-4336, Cys-4343, Cys-4370, Cys-4373, Cys-4381, and Cys-4383 together coordinate Zn(2+). One can recognise a NiRAN domain in the interval 4399 to 4653; the sequence is FLNRVCGVSA…TAESHVDTDL (255 aa). An LRR 7 repeat occupies 4591–4616; the sequence is AGIVGVLTLDNQDLNGNWYDFGDFIQ. Mn(2+)-binding residues include Asn-4601 and Asp-4610. The 99-residue stretch at 4658 to 4756 folds into the Nsp12 Interface domain; it reads IKWDLLKYDF…HNQDVNLHSS (99 aa). Residues His-4687, Cys-4693, Cys-4698, Cys-4702, and Cys-4879 each coordinate Zn(2+). Residues 4757-5324 enclose the Nsp12 RNA-dependent RNA polymerase domain; it reads RLSFKELLVY…AMYTPHTVLQ (568 aa). The rdRp Fingers N-ter stretch occupies residues 4759–4973; sequence SFKELLVYAA…HQKLLKSIAA (215 aa). Positions 4937–4947 are interaction with RMP Remdesivir; it reads KYAISAKNRAR. Positions 4974–5012 are rdRp Palm N-ter; the sequence is TRGATVVIGTSKFYGGWHNMLKTVYSDVENPHLMGWDYP. The region spanning 5004 to 5166 is the RdRp catalytic domain; sequence PHLMGWDYPK…CFNSTYASQG (163 aa). The rdRp Fingers C-ter stretch occupies residues 5013-5071; sequence KCDRAMPNMLRIMASLVLARKHTTCCSLSHRFYRLANECAQVLSEMVMCGGSLYVKPGG. Residues His-5034, Cys-5037, and Cys-5038 each contribute to the Zn(2+) site. The segment at 5072 to 5207 is rdRp Palm C-ter; sequence TSSGDATTAY…TKGPHEFCSQ (136 aa). Active-site residues include Ser-5151, Asp-5152, and Asp-5153. Residues 5208-5324 are rdRp Thumb; that stretch reads HTMLVKQGDD…AMYTPHTVLQ (117 aa). Positions 5325–5437 constitute a CV ZBD domain; it reads AVGACVLCNS…TDFNAIATCD (113 aa). Residues Cys-5329, Cys-5332, Cys-5340, Cys-5343, Cys-5350, Cys-5353, His-5357, His-5363, Cys-5374, Cys-5379, Cys-5396, and His-5399 each contribute to the Zn(2+) site. One copy of the LRR 8 repeat lies at 5552 to 5572; the sequence is TSHTVMPLSAPTLVPQEHYVR. The (+)RNA virus helicase ATP-binding domain maps to 5581-5762; sequence NISDEFSSNV…MKTIGPDMFL (182 aa). 5606–5613 is a binding site for a ribonucleoside 5'-triphosphate; that stretch reads GPPGTGKS. One can recognise a (+)RNA virus helicase C-terminal domain in the interval 5763–5932; sequence GTCRRCPAEI…TLQAENVTGL (170 aa). The region spanning 5997–6212 is the ExoN domain; that stretch reads MFITREEAIR…RCLAVHECFV (216 aa). Residues Asp-6015, Glu-6017, and Glu-6116 contribute to the active site. Positions 6015, 6017, and 6116 each coordinate Mg(2+). Positions 6132, 6135, 6151, 6154, 6182, 6186, and 6189 each coordinate Zn(2+). Catalysis depends on residues His-6193 and Asp-6198. Residues His-6193 and Asp-6198 each coordinate Mg(2+). Residue Cys-6204 participates in Zn(2+) binding. Residues 6221–6452 enclose the N7-MTase domain; sequence YPIIGDELKI…NLWNTFTRLQ (232 aa). An S-adenosyl-L-methionine-binding site is contributed by 6256–6262; it reads DIGNPKA. Residues 6339–6353 form a gpppA-binding region; sequence CDGGSLYVNKHAFHT. Cys-6377, Cys-6402, Cys-6409, and His-6412 together coordinate Zn(2+). A Nsp15 N-terminal oligomerization domain is found at 6453–6513; that stretch reads SLENVAFNVV…NVAFELWAKR (61 aa). An AV-Nsp11N/CoV-Nsp15M domain is found at 6514 to 6639; that stretch reads NIKPVPEVKI…YYKKVDGVVQ (126 aa). A NendoU domain is found at 6656 to 6795; the sequence is KPRSQMEIDF…KDGHVETFYP (140 aa). The Proton donor; for uridylate-specific endoribonuclease nsp15 activity role is filled by His-6686. The active-site Proton acceptor; for uridylate-specific endoribonuclease nsp15 activity is the His-6701. Catalysis depends on Lys-6741, which acts as the For uridylate-specific endoribonuclease nsp15 activity. Uracil-binding positions include 6741-6745 and 6792-6796; these read KCVCS and TFYPK. The Nidovirus-type SAM-dependent 2'-O-MTase domain occupies 6800–7094; sequence SQAWQPGVAM…RVVISSDVLV (295 aa). The stretch at 6817–6841 is one LRR 9 repeat; the sequence is RMLLEKCDLQNYGDSATLPKGIMMN. Residues Lys-6844, Asp-6928, Lys-6968, and Glu-7001 contribute to the active site.

This sequence belongs to the coronaviruses polyprotein 1ab family. Interacts with host GIGYF2. As to quaternary structure, may form homohexamers. Interacts with N protein. In terms of assembly, 3CL-PRO exists as monomer and homodimer. Only the homodimer shows catalytic activity. Interacts with host FBXO22; this interaction promotes the proteasomal degradation of nsp5. Interacts with PL-PRO and nsp6. As to quaternary structure, forms homodimers. Interacts with host ZFYVE1 (DFCP1), which leads to ER and DMVs binding to lipid droplets. Interacts with host TBK1; this interaction decreases IRF3 phosphorylation by 57%, which leads to reduced IFN-beta production. In terms of assembly, interacts with nsp8 and nsp12 to form the replication-transcription complex (RTC): nsp12, nsp7, two subunits of nsp8, and up to two subunits of nsp13. Eight copies of nsp7 and eight copies of nsp8 assemble to form a heterohexadecamer dsRNA-encircling ring structure. Interacts with nsp7, nsp13 and nsp12 to form the replication-transcription complex (RTC): nsp12, nsp7, two subunits of nsp8, and up to two subunits of nsp13. Eight copies of nsp7 and eight copies of nsp8 assemble to form a heterohexadecamer dsRNA-encircling ring structure. As to quaternary structure, is a dimer. Interacts with NSP12. Interacts with host SND1. In terms of assembly, forms a dodecamer and interacts with nsp14 and nsp16; these interactions enhance nsp14 and nsp16 enzymatic activities. Interacts with nsp7 and nsp8 to form the replication-transcription complex (RTC): nsp12, nsp7, two subunits of nsp8, and up to two subunits of nsp13. Interacts with nsp9. As to quaternary structure, interacts with nsp8 to form the replication-transcription complex (RTC): nsp12, nsp7, two subunits of nsp8, and up to two subunits of nsp13. Interacts with host TBK1; this interaction inhibits TBK1 phosphorylation and decreases by 75% IRF3 phosphorylation, which leads to reduced IFN-beta production. In terms of assembly, interacts (via N-terminus) with DDX1. Interacts with nsp10. Homohexamer. As to quaternary structure, interacts with nsp10. It depends on Mn(2+) as a cofactor. Mg(2+) is required as a cofactor. Specific enzymatic cleavages in vivo by its own proteases yield mature proteins. 3CL-PRO and PL-PRO proteinases are autocatalytically processed.

The protein resides in the host cytoplasm. The protein localises to the host endosome. Its subcellular location is the host endoplasmic reticulum membrane. It localises to the host Golgi apparatus. It is found in the host nucleus. The protein resides in the host perinuclear region. The protein localises to the host endoplasmic reticulum. Its subcellular location is the host endoplasmic reticulum-Golgi intermediate compartment. The enzyme catalyses RNA(n) + a ribonucleoside 5'-triphosphate = RNA(n+1) + diphosphate. It catalyses the reaction ATP + H2O = ADP + phosphate + H(+). It carries out the reaction TSAVLQ-|-SGFRK-NH2 and SGVTFQ-|-GKFKK the two peptides corresponding to the two self-cleavage sites of the SARS 3C-like proteinase are the two most reactive peptide substrates. The enzyme exhibits a strong preference for substrates containing Gln at P1 position and Leu at P2 position.. The catalysed reaction is Thiol-dependent hydrolysis of ester, thioester, amide, peptide and isopeptide bonds formed by the C-terminal Gly of ubiquitin (a 76-residue protein attached to proteins as an intracellular targeting signal).. The enzyme catalyses a 5'-end (N(7)-methyl 5'-triphosphoguanosine)-ribonucleoside in mRNA + S-adenosyl-L-methionine = a 5'-end (N(7)-methyl 5'-triphosphoguanosine)-(2'-O-methyl-ribonucleoside) in mRNA + S-adenosyl-L-homocysteine + H(+). It catalyses the reaction uridylyl-uridylyl-ribonucleotide-RNA = a 3'-end uridylyl-2',3'-cyclophospho-uridine-RNA + a 5'-end dephospho-ribonucleoside-RNA. It carries out the reaction a 5'-end diphospho-ribonucleoside in mRNA + GTP + H(+) = a 5'-end (5'-triphosphoguanosine)-ribonucleoside in mRNA + diphosphate. The catalysed reaction is a 5'-end (5'-triphosphoguanosine)-ribonucleoside in mRNA + S-adenosyl-L-methionine = a 5'-end (N(7)-methyl 5'-triphosphoguanosine)-ribonucleoside in mRNA + S-adenosyl-L-homocysteine. Its activity is regulated as follows. Inhibited in vitro by GRL-0617. With respect to regulation, inhibited ex vivo by K22. It may shift NSP6 zippering activity towards the nuclear envelope, thereby impairing formation of the NSP6-compartment necessary for viral transcription/replication. Inhibited by Remdesivir antiviral drug (GS-5734). Its activity is regulated as follows. Inhibited by Remdesivir antiviral drug (GS-5734) through non-obligate RNA chain termination. With respect to regulation, inhibited by pyridone-containing alpha-ketoamides compounds 13a and 13b. In turn, alpha-ketoamide 13b (tert-butyl (1-((S)-1-(((S)-4-(benzylamino)-3,4-dioxo-1-((S)-2-oxopyrrolidin-3-yl)butan-2-yl)amino)-3-cyclopropyl-1-oxopropan-2-yl)-2-oxo-1,2-dihydropyridin-3-yl)carbamate) inhibits SARS-CoV-2 replication in human lung cells. Inhibited ex vivo by michael acceptor inhibitor N3. Inhibited ex vivo by compound 11a and 11b. Its function is as follows. Multifunctional protein involved in the transcription and replication of viral RNAs. Contains the proteinases responsible for the cleavages of the polyprotein. Inhibits host translation by associating with the open head conformation of the 40S subunit. The C-terminus binds to and obstructs ribosomal mRNA entry tunnel. Thereby inhibits antiviral response triggered by innate immunity or interferons. The nsp1-40S ribosome complex further induces an endonucleolytic cleavage near the 5'UTR of host mRNAs, targeting them for degradation. This inhibits the integrated stress response (ISR) in the infected cell by preventing EIF2S1/eIF2-alpha phosphorylation upstream of stress granule formation and depletes host G3BP1. Viral mRNAs less susceptible to nsp1-mediated inhibition of translation, because of their 5'-end leader sequence. Functionally, enhances mRNA repression of the 4EHP-GYF2 complex in the host, thereby inhibiting the antiviral response and facilitating SARS-CoV-2 replication. Possibly acts in cooperation with nsp1, which induces ribosome stalling on host mRNA, triggering mRNA repression by the host 4EHP-GYF2 complex which is enhanced by nsp2. In terms of biological role, responsible for the cleavages located at the N-terminus of the replicase polyprotein. Participates together with nsp4 in the assembly of virally-induced cytoplasmic double-membrane vesicles necessary for viral replication. Antagonizes innate immune induction of type I interferon by blocking the phosphorylation, dimerization and subsequent nuclear translocation of host IRF3. Also prevents host NF-kappa-B signaling. In addition, PL-PRO possesses a deubiquitinating/deISGylating activity and processes both 'Lys-48'- and 'Lys-63'-linked polyubiquitin chains from cellular substrates. Cleaves preferentially ISG15 from antiviral protein IFIH1 (MDA5), but not RIGI. Can play a role in host ADP-ribosylation by ADP-ribose. Plays a role in the formation and maintenance of double membrane vesicles (DMVs) replication organelles. DMVs are formed by nsp3 and nsp4, while nsp6 zippers ER membranes and connects to lipid droplets. Its function is as follows. Plays a role in the formation and maintenance of double membrane vesicles (DMVs) replication organelles. DMVs are formed by nsp3 and nsp4, while nsp6 zippers ER membranes and connects to lipid droplets. Cleaves the C-terminus of replicase polyprotein at 11 sites. Recognizes substrates containing the core sequence [ILMVF]-Q-|-[SGACN]. Cleaves and inactivates human TRMT1, preventing tRNA guanine(26)-dimethylation of tRNAs. May cleave human NLRP1 in lung epithelial cells, thereby activating the NLRP1 inflammasome pathway. May cleave human GSDMD, triggering alternative GSDME-mediated epithelial cell death upon activation of the NLRP1 inflammasome, which may enhance the release interleukins 1B, 6, 16 and 18. Also able to bind an ADP-ribose-1''-phosphate (ADRP). Functionally, plays a role in the formation and maintenance of double membrane vesicles (DMVs) replication organelles. DMVs are formed by nsp3 and nsp4, while nsp6 zippers ER membranes and connects to lipid droplets. LDs are consumed during DMV formation. Binds to host TBK1 without affecting TBK1 phosphorylation; the interaction with TBK1 decreases IRF3 phosphorylation, which leads to reduced IFN-beta production. In terms of biological role, plays a role in viral RNA synthesis. Forms a hexadecamer with nsp8 (8 subunits of each) that may participate in viral replication by acting as a primase. Alternatively, may synthesize substantially longer products than oligonucleotide primers. Its function is as follows. Plays a role in viral RNA synthesis. Forms a hexadecamer with nsp7 (8 subunits of each) that may participate in viral replication by acting as a primase. Alternatively, may synthesize substantially longer products than oligonucleotide primers. Interacts with ribosome signal recognition particle RNA (SRP). Together with NSP9, suppress protein integration into the cell membrane, thereby disrupting host immune defenses. Forms a primer, NSP9-pU, which is utilized by the polymerase for the initiation of RNA chains. Interacts with ribosome signal recognition particle RNA (SRP). Together with NSP8, suppress protein integration into the cell membrane, thereby disrupting host immune defenses. Functionally, plays a pivotal role in viral transcription by stimulating both nsp14 3'-5' exoribonuclease and nsp16 2'-O-methyltransferase activities. Therefore plays an essential role in viral mRNAs cap methylation. In terms of biological role, RNA-directed RNA polymerase that catalyzes the transcription of viral genomic and subgenomic RNAs. Acts in complex with nsp7 and nsp8 to transcribe both the minus and positive strands of genomic RNA. The kinase-like NiRAN domain of NSP12 attaches one or more nucleotides to the amino terminus of NSP9, forming a covalent RNA-protein intermediate that serves as transcription/replication primer. Subgenomic RNAs (sgRNAs) are formed by discontinuous transcription: The polymerase has the ability to pause at transcription-regulating sequences (TRS) and jump to the leader TRS, resulting in a major deletion. This creates a series of subgenomic RNAs that are replicated, transcribed and translated. In addition, Nsp12 is a subunit of the viral RNA capping enzyme that catalyzes the RNA guanylyltransferase reaction for genomic and sub-genomic RNAs. Subsequently, the NiRAN domain transfers RNA to GDP, and forms the core cap structure GpppA-RNA. Its function is as follows. Plays a role in viral RNA synthesis. Multi-functional protein with a zinc-binding domain in N-terminus displaying RNA and DNA duplex-unwinding activities with 5' to 3' polarity. Activity of helicase is dependent on magnesium. Binds to host TBK1 and inhibits TBK1 phosphorylation; the interaction with TBK1 decreases IRF3 phosphorylation, which leads to reduced IFN-beta production. Plays a role in viral RNA synthesis through two distinct activities. The N7-guanine methyltransferase activity plays a role in the formation of the cap structure GpppA-RNA. The proofreading exoribonuclease reduces the sensitivity of the virus to RNA mutagens during replication. This activity acts on both ssRNA and dsRNA in a 3'-5' direction. Functionally, plays a role in viral transcription/replication and prevents the simultaneous activation of host cell dsRNA sensors, such as MDA5/IFIH1, OAS, and PKR. Acts by degrading the 5'-polyuridines generated during replication of the poly(A) region of viral genomic and subgenomic RNAs. Catalyzes a two-step reaction in which a 2'3'-cyclic phosphate (2'3'-cP) is first generated by 2'-O transesterification, which is then hydrolyzed to a 3'-phosphate (3'-P). If not degraded, poly(U) RNA would hybridize with poly(A) RNA tails and activate host dsRNA sensors. May bind genomic dsRNA in association with the replication-transcription complex (RTC), and play a role in nsp12 discontinous transcription. In terms of biological role, methyltransferase that mediates mRNA cap 2'-O-ribose methylation to the 5'-cap structure of viral mRNAs. N7-methyl guanosine cap is a prerequisite for binding of nsp16. Therefore, it plays an essential role in cap methylation of viral mRNAs, which is essential to evade the immune system, especially when restricted by human IFIT1 and IFIT3. May disrupt host mRNA splicing in nucleus by interacting with pre-mRNA Recognition Domains of the U1 and U2 snRNAs. The protein is Replicase polyprotein 1ab (rep) of Homo sapiens (Human).